The sequence spans 147 residues: Shadow of prion protein (147 aa).

Positions 1–24 are cleaved as a signal peptide; it reads MNWTAATCWALLLAAAFLCDSCSA. Over residues 26 to 43 the composition is skewed to gly residues; sequence GGRGGARGSARGVRGGAR. The tract at residues 26–45 is disordered; sequence GGRGGARGSARGVRGGARGA. N107 carries an N-linked (GlcNAc...) asparagine glycan. The GPI-anchor amidated glycine moiety is linked to residue G122. A propeptide spans 123-147 (removed in mature form); sequence SGSVHSPRICLLLGGTLGALELLRP.

Belongs to the SPRN family. In terms of processing, N-glycosylated. As to expression, mainly expressed in brain (at protein level). In brain, it is highly expressed in the hippocampus and cerebellum and is also expressed at lower level in other areas of the brain including the cerebral cortex, the thalamus and the medulla. In hippocampus and cerebellum it is highly expressed in the cell bodies of pyramidal cells and Purkinje cells, respectively.

The protein localises to the cell membrane. Its function is as follows. Prion-like protein that has PrP(C)-like neuroprotective activity. May act as a modulator for the biological actions of normal and abnormal PrP. This is Shadow of prion protein (Sprn) from Mus musculus (Mouse).